Reading from the N-terminus, the 230-residue chain is Cytidylate kinase (230 aa).

10–18 (GPAGSGKST) serves as a coordination point for ATP.

Belongs to the cytidylate kinase family. Type 1 subfamily.

Its subcellular location is the cytoplasm. The catalysed reaction is CMP + ATP = CDP + ADP. The enzyme catalyses dCMP + ATP = dCDP + ADP. The chain is Cytidylate kinase from Leptospira borgpetersenii serovar Hardjo-bovis (strain L550).